Reading from the N-terminus, the 507-residue chain is Ribosomal protein uS12 methylthiotransferase RimO (507 aa).

Positions 13–124 (RRVALLTLGC…ISDRLGAVLA (112 aa)) constitute an MTTase N-terminal domain. The [4Fe-4S] cluster site is built by Cys-22, Cys-58, and Cys-87. A disordered region spans residues 150–175 (AAVSLPGHGTRAAAAGPGGRSAPVEV). Residues 155–172 (PGHGTRAAAAGPGGRSAP) show a composition bias toward low complexity. The region spanning 191–422 (LDTGPVASLK…ALADELCAQR (232 aa)) is the Radical SAM core domain. Residues Cys-205, Cys-209, and Cys-212 each coordinate [4Fe-4S] cluster. One can recognise a TRAM domain in the interval 424 to 497 (EQRLGSTVQV…GVDLVAVPDG (74 aa)).

The protein belongs to the methylthiotransferase family. RimO subfamily. Requires [4Fe-4S] cluster as cofactor.

It is found in the cytoplasm. The catalysed reaction is L-aspartate(89)-[ribosomal protein uS12]-hydrogen + (sulfur carrier)-SH + AH2 + 2 S-adenosyl-L-methionine = 3-methylsulfanyl-L-aspartate(89)-[ribosomal protein uS12]-hydrogen + (sulfur carrier)-H + 5'-deoxyadenosine + L-methionine + A + S-adenosyl-L-homocysteine + 2 H(+). Its function is as follows. Catalyzes the methylthiolation of an aspartic acid residue of ribosomal protein uS12. This chain is Ribosomal protein uS12 methylthiotransferase RimO, found in Salinispora arenicola (strain CNS-205).